The sequence spans 467 residues: Uronate isomerase (467 aa).

This sequence belongs to the metallo-dependent hydrolases superfamily. Uronate isomerase family.

It carries out the reaction D-glucuronate = D-fructuronate. It catalyses the reaction aldehydo-D-galacturonate = keto-D-tagaturonate. It functions in the pathway carbohydrate metabolism; pentose and glucuronate interconversion. In Flavobacterium johnsoniae (strain ATCC 17061 / DSM 2064 / JCM 8514 / BCRC 14874 / CCUG 350202 / NBRC 14942 / NCIMB 11054 / UW101) (Cytophaga johnsonae), this protein is Uronate isomerase.